The primary structure comprises 88 residues: Large ribosomal subunit protein eL34 (88 aa).

The protein belongs to the eukaryotic ribosomal protein eL34 family.

This is Large ribosomal subunit protein eL34 from Saccharolobus solfataricus (strain ATCC 35092 / DSM 1617 / JCM 11322 / P2) (Sulfolobus solfataricus).